A 44-amino-acid chain; its full sequence is Protein PsbN (44 aa).

Residues 6–26 traverse the membrane as a helical segment; the sequence is FFFTIFLWCLLLSITGYSIYV.

The protein belongs to the PsbN family.

The protein resides in the plastid. It localises to the chloroplast thylakoid membrane. Its function is as follows. May play a role in photosystem I and II biogenesis. In Chlorella vulgaris (Green alga), this protein is Protein PsbN.